The chain runs to 232 residues: Large ribosomal subunit protein uL1 (232 aa).

The protein belongs to the universal ribosomal protein uL1 family. Part of the 50S ribosomal subunit.

Its function is as follows. Binds directly to 23S rRNA. The L1 stalk is quite mobile in the ribosome, and is involved in E site tRNA release. Protein L1 is also a translational repressor protein, it controls the translation of the L11 operon by binding to its mRNA. In Sinorhizobium fredii (strain NBRC 101917 / NGR234), this protein is Large ribosomal subunit protein uL1.